The chain runs to 443 residues: ATP-dependent protease ATPase subunit HslU (443 aa).

Residues I18, 60 to 65, D256, E321, and R393 contribute to the ATP site; that span reads GVGKTE.

It belongs to the ClpX chaperone family. HslU subfamily. A double ring-shaped homohexamer of HslV is capped on each side by a ring-shaped HslU homohexamer. The assembly of the HslU/HslV complex is dependent on binding of ATP.

It is found in the cytoplasm. ATPase subunit of a proteasome-like degradation complex; this subunit has chaperone activity. The binding of ATP and its subsequent hydrolysis by HslU are essential for unfolding of protein substrates subsequently hydrolyzed by HslV. HslU recognizes the N-terminal part of its protein substrates and unfolds these before they are guided to HslV for hydrolysis. This Buchnera aphidicola subsp. Acyrthosiphon pisum (strain 5A) protein is ATP-dependent protease ATPase subunit HslU.